The primary structure comprises 113 residues: Antimicrobial peptide microplusin (113 aa).

Residues 1 to 19 (MKSLLVLALLAFGAVLVSA) form the signal peptide. 3 cysteine pairs are disulfide-bonded: Cys-25-Cys-71, Cys-38-Cys-99, and Cys-60-Cys-65.

Its subcellular location is the secreted. Has bacteriostatic activity against Gram-positive bacteria, but not against Gram-negative bacteria. Has fungistatic activity against some but not all fungi. Binds and sequesters copper and iron ions. Copper-chelating activity is crucial for antimicrobial activity against M.luteus. This Argas monolakensis (Mono lake bird tick) protein is Antimicrobial peptide microplusin.